The following is a 338-amino-acid chain: Secretory carrier-associated membrane protein 1 (338 aa).

A disordered region spans residues 1 to 64; that stretch reads MSDFDSNPFA…NVPNTQPAIM (64 aa). Serine 2 carries the post-translational modification N-acetylserine. Residue serine 2 is modified to Phosphoserine. Residues 2–155 are Cytoplasmic-facing; sequence SDFDSNPFAD…QKTVKLMYYL (154 aa). Phosphothreonine is present on threonine 45. Residues 156–176 traverse the membrane as a helical segment; it reads WMFHAVTLFLNIFGCLAWFCV. The Lumenal portion of the chain corresponds to 177-181; that stretch reads DSARA. A helical membrane pass occupies residues 182 to 202; sequence VDFGLSILWFLLFTPCSFVCW. At 203–218 the chain is on the cytoplasmic side; it reads YRPLYGAFRSDSSFRF. The chain crosses the membrane as a helical span at residues 219 to 239; the sequence is FVFFFVYICQFAVHVLQAAGF. Over 240–261 the chain is Lumenal; sequence HNWGNCGWISSLTGLNQNIPVG. Residues 262-282 traverse the membrane as a helical segment; the sequence is IMMIIIAALFTASAVISLVMF. Over 283-338 the chain is Cytoplasmic; that stretch reads KKVHGLYRTTGASFEKAQQEFATGVMSNKTVQTAAANAASTAASSAAQNAFKGNQI.

Belongs to the SCAMP family. As to quaternary structure, interacts with SYNRG and ITSN1. Interacts with SLC9A7. In terms of tissue distribution, widely expressed, with highest expression in brain.

The protein localises to the golgi apparatus. It localises to the trans-Golgi network membrane. It is found in the recycling endosome membrane. Functionally, functions in post-Golgi recycling pathways. Acts as a recycling carrier to the cell surface. The chain is Secretory carrier-associated membrane protein 1 (SCAMP1) from Homo sapiens (Human).